The sequence spans 185 residues: MVSSWRVQQAAREIRAGAVIAYPTEAVWGLGCDPWNEEAVDRLLAIKSRSVDKGLILIADNIHQFDFLFEDFPDTWIDRMSSTWPGPNTWLVPHQNLLPEWVTGVHDTVALRVSDHPLVRELCSLVGPLISTSANPQGRPAARTRLRIEQYFRGQLDLVLSGSLGGRKNPSLIRDLATGKVVRPS.

The YrdC-like domain occupies 4-185; sequence SWRVQQAARE…LATGKVVRPS (182 aa).

It belongs to the SUA5 family. TsaC subfamily.

Its subcellular location is the cytoplasm. It catalyses the reaction L-threonine + hydrogencarbonate + ATP = L-threonylcarbamoyladenylate + diphosphate + H2O. In terms of biological role, required for the formation of a threonylcarbamoyl group on adenosine at position 37 (t(6)A37) in tRNAs that read codons beginning with adenine. Catalyzes the conversion of L-threonine, HCO(3)(-)/CO(2) and ATP to give threonylcarbamoyl-AMP (TC-AMP) as the acyladenylate intermediate, with the release of diphosphate. This is Threonylcarbamoyl-AMP synthase from Pseudomonas fluorescens (strain ATCC BAA-477 / NRRL B-23932 / Pf-5).